Here is a 218-residue protein sequence, read N- to C-terminus: Uracil-DNA glycosylase (218 aa).

This sequence belongs to the uracil-DNA glycosylase (UDG) superfamily. UNG family. In terms of assembly, homodimer. Interacts with protein OPG148. Component of the Uracil-DNA glycosylase(UDG)-OPG148-polymerase complex; OPG148 and UDG form a heterodimeric processivity factor that associates with OPG71 to form the processive polymerase holoenzyme.

The catalysed reaction is Hydrolyzes single-stranded DNA or mismatched double-stranded DNA and polynucleotides, releasing free uracil.. Functionally, plays an essential role in viral replication as a component of the DNA polymerase processivity factor. Excises uracil residues from the DNA which can arise as a result of misincorporation of dUMP residues by DNA polymerase or due to deamination of cytosine. The chain is Uracil-DNA glycosylase (OPG116) from Monkeypox virus.